Here is a 206-residue protein sequence, read N- to C-terminus: Tektin bundle-interacting protein 1 (206 aa).

As to quaternary structure, microtubule inner protein component of sperm flagellar doublet microtubules.

The protein localises to the cytoplasm. It localises to the cytoskeleton. It is found in the cilium axoneme. Its subcellular location is the flagellum axoneme. Microtubule inner protein (MIP) part of the dynein-decorated doublet microtubules (DMTs) in cilia axoneme, which is required for motile cilia beating. Located at the center of the tektin bundle where may function to recruit tektins or stabilize the bundle. The protein is Tektin bundle-interacting protein 1 of Mus musculus (Mouse).